Consider the following 104-residue polypeptide: UPF0213 protein ORF82 (104 aa).

In terms of domain architecture, GIY-YIG spans 7–83 (KVWCVYIVRR…KRKRGKYFKL (77 aa)).

It belongs to the UPF0213 family.

The polypeptide is UPF0213 protein ORF82 (Orgyia pseudotsugata (Douglas-fir tussock moth)).